The following is a 405-amino-acid chain: Histidine decarboxylase (405 aa).

Position 121 (His121) interacts with substrate. Lys234 bears the N6-(pyridoxal phosphate)lysine mark.

This sequence belongs to the group II decarboxylase family. In terms of assembly, homotetramer. Requires pyridoxal 5'-phosphate as cofactor.

It carries out the reaction L-histidine + H(+) = histamine + CO2. The protein operates within siderophore biosynthesis; pseudomonine biosynthesis. The polypeptide is Histidine decarboxylase (Pseudomonas fluorescens).